The sequence spans 355 residues: Phenylalanine--tRNA ligase alpha subunit (355 aa).

Residue Glu-273 participates in Mg(2+) binding.

This sequence belongs to the class-II aminoacyl-tRNA synthetase family. Phe-tRNA synthetase alpha subunit type 1 subfamily. As to quaternary structure, tetramer of two alpha and two beta subunits. Mg(2+) serves as cofactor.

The protein resides in the cytoplasm. The catalysed reaction is tRNA(Phe) + L-phenylalanine + ATP = L-phenylalanyl-tRNA(Phe) + AMP + diphosphate + H(+). The polypeptide is Phenylalanine--tRNA ligase alpha subunit (Bifidobacterium longum (strain NCC 2705)).